A 124-amino-acid polypeptide reads, in one-letter code: Small ribosomal subunit protein uS12c (124 aa).

The protein belongs to the universal ribosomal protein uS12 family. Part of the 30S ribosomal subunit.

Its subcellular location is the plastid. It is found in the chloroplast. Its function is as follows. With S4 and S5 plays an important role in translational accuracy. Located at the interface of the 30S and 50S subunits. This chain is Small ribosomal subunit protein uS12c (rps12), found in Cyanidium caldarium (Red alga).